Reading from the N-terminus, the 139-residue chain is Actin-depolymerizing factor 7 (139 aa).

Residues 7 to 139 (GMAVDDECKL…GLDVIRGRAN (133 aa)) enclose the ADF-H domain.

Belongs to the actin-binding proteins ADF family.

Its function is as follows. Actin-depolymerizing protein. Severs actin filaments (F-actin) and binds to actin monomers. The chain is Actin-depolymerizing factor 7 (ADF7) from Oryza sativa subsp. japonica (Rice).